The sequence spans 287 residues: MAGAKEIRSKIASVQNTQKITKAMEMVAASKMRKSQDRMAASRPYADTMRKVIGHLANGNLEYKHPYLEERDVKRVGYLVVSTDRGLCGGLNINLFKKLLADMKAWSDKGVQCDLAMIGSKGVSFFSSVGGNVVAQVTGMGDNPSLSELIGPVKVMLQAYDEGRLDKLYIVSNKFINTMSQVPTITQLLPLPASEDDELKRKTWDYLYEPDPKALLDTLLRRYVESQVYQGVVENLASEQAARMVSMKAATDNGGSLIKELQLVYNKARQASITQELTEIVGGASAV.

It belongs to the ATPase gamma chain family. F-type ATPases have 2 components, CF(1) - the catalytic core - and CF(0) - the membrane proton channel. CF(1) has five subunits: alpha(3), beta(3), gamma(1), delta(1), epsilon(1). CF(0) has three main subunits: a, b and c.

It is found in the cell inner membrane. Produces ATP from ADP in the presence of a proton gradient across the membrane. The gamma chain is believed to be important in regulating ATPase activity and the flow of protons through the CF(0) complex. This chain is ATP synthase gamma chain, found in Citrobacter koseri (strain ATCC BAA-895 / CDC 4225-83 / SGSC4696).